A 255-amino-acid chain; its full sequence is Gene 54 protein (255 aa).

In Mycobacterium phage D29 (Mycobacteriophage D29), this protein is Gene 54 protein (54).